The primary structure comprises 244 residues: Probable metallo-hydrolase YhfI (244 aa).

Residues His59, His61, Asp63, His64, His134, Asp155, and His211 each contribute to the Zn(2+) site.

Belongs to the metallo-beta-lactamase superfamily. Requires Zn(2+) as cofactor.

This Bacillus subtilis (strain 168) protein is Probable metallo-hydrolase YhfI (yhfI).